A 654-amino-acid polypeptide reads, in one-letter code: 4-hydroxy-3-methylbut-2-en-1-yl diphosphate synthase (flavodoxin) (654 aa).

Cysteine 557, cysteine 560, cysteine 591, and glutamate 598 together coordinate [4Fe-4S] cluster.

This sequence belongs to the IspG family. Requires [4Fe-4S] cluster as cofactor.

The enzyme catalyses (2E)-4-hydroxy-3-methylbut-2-enyl diphosphate + oxidized [flavodoxin] + H2O + 2 H(+) = 2-C-methyl-D-erythritol 2,4-cyclic diphosphate + reduced [flavodoxin]. The protein operates within isoprenoid biosynthesis; isopentenyl diphosphate biosynthesis via DXP pathway; isopentenyl diphosphate from 1-deoxy-D-xylulose 5-phosphate: step 5/6. Its function is as follows. Converts 2C-methyl-D-erythritol 2,4-cyclodiphosphate (ME-2,4cPP) into 1-hydroxy-2-methyl-2-(E)-butenyl 4-diphosphate. This chain is 4-hydroxy-3-methylbut-2-en-1-yl diphosphate synthase (flavodoxin), found in Protochlamydia amoebophila (strain UWE25).